The following is a 257-amino-acid chain: Enterotoxin type A (257 aa).

The signal sequence occupies residues M1–K27. C120 and C130 are joined by a disulfide. 3 residues coordinate Zn(2+): H211, H249, and D251.

It belongs to the staphylococcal/streptococcal toxin family. As to quaternary structure, monomer. Interacts with MHC class II molecules alpha/HLA-DRB1 and beta/HLA-DRA chains. The interaction with MHC-II molecules occurs at both zinc-dependent and zinc-independent sites. Interacts with T-cell receptor beta variable 7-9/TRBV7-9. It depends on Zn(2+) as a cofactor.

Its subcellular location is the secreted. Functionally, staphylococcal enterotoxin that activates the host immune system by binding as unprocessed molecules to major histocompatibility (MHC) complex class II and T-cell receptor (TCR) molecules. In turn, waves of cellular activation, cytokine production, and migration into the lung tissue and airways occur via alphabeta T-cells. Also causes the intoxication staphylococcal food poisoning syndrome. The illness is characterized by high fever, hypotension, diarrhea, shock, and in some cases death. This is Enterotoxin type A (sea) from Staphylococcus aureus (strain Newman).